A 95-amino-acid polypeptide reads, in one-letter code: uncharacterized protein (95 aa).

This is an uncharacterized protein from Schizosaccharomyces pombe (strain 972 / ATCC 24843) (Fission yeast).